Consider the following 415-residue polypeptide: Gamma-glutamyl phosphate reductase (415 aa).

This sequence belongs to the gamma-glutamyl phosphate reductase family.

It localises to the cytoplasm. It carries out the reaction L-glutamate 5-semialdehyde + phosphate + NADP(+) = L-glutamyl 5-phosphate + NADPH + H(+). It participates in amino-acid biosynthesis; L-proline biosynthesis; L-glutamate 5-semialdehyde from L-glutamate: step 2/2. Catalyzes the NADPH-dependent reduction of L-glutamate 5-phosphate into L-glutamate 5-semialdehyde and phosphate. The product spontaneously undergoes cyclization to form 1-pyrroline-5-carboxylate. This is Gamma-glutamyl phosphate reductase from Listeria welshimeri serovar 6b (strain ATCC 35897 / DSM 20650 / CCUG 15529 / CIP 8149 / NCTC 11857 / SLCC 5334 / V8).